The primary structure comprises 458 residues: MALDQVSIPPSYHGLAIQRIPLRTGLVPAEPMKTLVPSKSKLNTIEAKRIMSVLDEAIHKIELITLMSYMESHPEALEDTLPEDFVRALREHLDIGQTLVERASILQRRHKKLEEEEEAEETRNQERLLSLELHKVNLLTLAHQFRDSTKTVLRLVLGEPQFTRLLQVQAPGRSPGAQCLLDGLVELRGFLFEKLLTSPMEVREKNQFIQDISRRSERNQEVIDDLQAELANVLKNKESEVEKENFVIQELKNHLHQVFKFSENSLLRTKQEAEKQQKVDFRASQVRLAKTQQDILALRAQYHNLVMENREAEQALRKKKYKVETEIENWIQKYDMEMGEKQDEYEDLESIHKEEKLQLEELRERHAVLVEEFSQIRAESEINSKKRVEAEREMVRMVRAATLIQAVWKGYLVRSILRSKKKKRGKGKGKDKGKGKEKPKEEKAKEKKPKAKGKGKKK.

3 coiled-coil regions span residues 96-137 (GQTL…HKVN), 209-255 (IQDI…KNHL), and 285-379 (QVRL…IRAE). An IQ domain is found at 397-426 (MVRAATLIQAVWKGYLVRSILRSKKKKRGK). Residues 419 to 458 (SKKKKRGKGKGKDKGKGKEKPKEEKAKEKKPKAKGKGKKK) are disordered. The segment covering 428–445 (KGKDKGKGKEKPKEEKAK) has biased composition (basic and acidic residues). Positions 446–458 (EKKPKAKGKGKKK) are enriched in basic residues.

Belongs to the DRC10 family. Component of the nexin-dynein regulatory complex (N-DRC). Interacts with CFAP52.

Its subcellular location is the cytoplasm. It is found in the cytoskeleton. The protein localises to the flagellum axoneme. Component of the nexin-dynein regulatory complex (N-DRC), a key regulator of ciliary/flagellar motility which maintains the alignment and integrity of the distal axoneme and regulates microtubule sliding in motile axonemes. The chain is Dynein regulatory complex protein 10 (Iqcd) from Mus musculus (Mouse).